The following is a 242-amino-acid chain: Small ribosomal subunit protein uS3 (242 aa).

One can recognise a KH type-2 domain in the interval 39-110; it reads IRKFIHKKYG…QVRINVVEVE (72 aa). A disordered region spans residues 221–242; it reads GASPRRRASRRPQQFEDRSNEG. The segment covering 233–242 has biased composition (basic and acidic residues); the sequence is QQFEDRSNEG.

The protein belongs to the universal ribosomal protein uS3 family. Part of the 30S ribosomal subunit. Forms a tight complex with proteins S10 and S14.

Binds the lower part of the 30S subunit head. Binds mRNA in the 70S ribosome, positioning it for translation. This chain is Small ribosomal subunit protein uS3, found in Parasynechococcus marenigrum (strain WH8102).